The following is a 504-amino-acid chain: Cholesterol 7-alpha-monooxygenase (504 aa).

C444 provides a ligand contact to heme.

Belongs to the cytochrome P450 family. Heme serves as cofactor.

The protein localises to the endoplasmic reticulum membrane. It localises to the microsome membrane. The catalysed reaction is cholesterol + reduced [NADPH--hemoprotein reductase] + O2 = 7alpha-hydroxycholesterol + oxidized [NADPH--hemoprotein reductase] + H2O + H(+). It functions in the pathway lipid metabolism; bile acid biosynthesis. In terms of biological role, catalyzes a rate-limiting step in cholesterol catabolism and bile acid biosynthesis by introducing a hydrophilic moiety at position 7 of cholesterol. Important for cholesterol homeostasis. This chain is Cholesterol 7-alpha-monooxygenase (CYP7A1), found in Cricetulus griseus (Chinese hamster).